Reading from the N-terminus, the 723-residue chain is Homeobox protein vnd (723 aa).

Disordered regions lie at residues 1 to 115 (MTTS…GLAP), 224 to 307 (AHHG…HHHP), 465 to 549 (GSSG…RKRR), and 703 to 723 (HAHA…AWWP). Basic and acidic residues predominate over residues 10-22 (TPSKRDRDRERDN). Positions 23–36 (SSGLGSAGSLPASP) are enriched in low complexity. Positions 37-48 (QSAITVSPSSPA) are enriched in polar residues. The span at 61–92 (LERKREREDREDREDRKERQERHERDRDHERF) shows a compositional bias: basic and acidic residues. Residues 97–111 (STASTTVPTNTSSSS) show a composition bias toward low complexity. Residues 226-235 (HGSDLSHHSA) show a composition bias toward basic and acidic residues. Positions 237–255 (ESTSGHRGQGSHTSPSALS) are enriched in polar residues. A compositionally biased stretch (basic and acidic residues) spans 278-289 (EADHHSTTEHHA). Residues 298-307 (HPHHQQHHHP) are compositionally biased toward basic residues. Low complexity predominate over residues 483-493 (NNNNNTTNNNN). Residues 512–528 (LNEDGIEEDIDDVDDAD) show a composition bias toward acidic residues. The segment at residues 545 to 604 (KRKRRVLFTKAQTYELERRFRQQRYLSAPEREHLASLIRLTPTQVKIWFQNHRYKTKRAQ) is a DNA-binding region (homeobox). The span at 703–716 (HAHAHGHGHPHAHA) shows a compositional bias: basic residues.

This sequence belongs to the NK-2 homeobox family. In terms of tissue distribution, expressed in the CNS and midgut.

The protein localises to the nucleus. Its function is as follows. Probable transcriptional regulator involved in the regulation of the proneural AS-C genes and the neurogenic genes of the enhancer of split complex. Could specifically activate proneural genes in the ventral-most neuroectoderm. The chain is Homeobox protein vnd (vnd) from Drosophila melanogaster (Fruit fly).